A 145-amino-acid chain; its full sequence is Transcriptional regulator MraZ (145 aa).

SpoVT-AbrB domains are found at residues 7–54 (NATN…GPDL) and 83–126 (GVFM…QPQA).

This sequence belongs to the MraZ family. Forms oligomers.

The protein localises to the cytoplasm. It localises to the nucleoid. The polypeptide is Transcriptional regulator MraZ (Rhizobium leguminosarum bv. trifolii (strain WSM2304)).